The primary structure comprises 150 residues: UPF0098 protein CT_736 (150 aa).

The protein belongs to the UPF0098 family.

The chain is UPF0098 protein CT_736 from Chlamydia trachomatis serovar D (strain ATCC VR-885 / DSM 19411 / UW-3/Cx).